Consider the following 334-residue polypeptide: Aspartate carbamoyltransferase catalytic subunit (334 aa).

Carbamoyl phosphate is bound by residues Arg-71 and Thr-72. Residue Lys-99 participates in L-aspartate binding. Carbamoyl phosphate-binding residues include Arg-121, His-151, and Gln-154. L-aspartate-binding residues include Arg-184 and Arg-239. Gly-280 and Pro-281 together coordinate carbamoyl phosphate.

Belongs to the aspartate/ornithine carbamoyltransferase superfamily. ATCase family. As to quaternary structure, heterododecamer (2C3:3R2) of six catalytic PyrB chains organized as two trimers (C3), and six regulatory PyrI chains organized as three dimers (R2).

It carries out the reaction carbamoyl phosphate + L-aspartate = N-carbamoyl-L-aspartate + phosphate + H(+). It participates in pyrimidine metabolism; UMP biosynthesis via de novo pathway; (S)-dihydroorotate from bicarbonate: step 2/3. Its function is as follows. Catalyzes the condensation of carbamoyl phosphate and aspartate to form carbamoyl aspartate and inorganic phosphate, the committed step in the de novo pyrimidine nucleotide biosynthesis pathway. In Pseudomonas putida (strain GB-1), this protein is Aspartate carbamoyltransferase catalytic subunit.